A 126-amino-acid polypeptide reads, in one-letter code: Holo-[acyl-carrier-protein] synthase (126 aa).

Aspartate 8 and glutamate 57 together coordinate Mg(2+).

It belongs to the P-Pant transferase superfamily. AcpS family. The cofactor is Mg(2+).

The protein resides in the cytoplasm. It carries out the reaction apo-[ACP] + CoA = holo-[ACP] + adenosine 3',5'-bisphosphate + H(+). Transfers the 4'-phosphopantetheine moiety from coenzyme A to a Ser of acyl-carrier-protein. In Halorhodospira halophila (strain DSM 244 / SL1) (Ectothiorhodospira halophila (strain DSM 244 / SL1)), this protein is Holo-[acyl-carrier-protein] synthase.